A 122-amino-acid chain; its full sequence is MEPWWPRGTGANAPWVLVAVPPGLFPSLLGACCTLTSSSWLQPRFWGLGWRVEVGLEGAGGSSQNYQAALPSFFCLAASPASRPAIFGILAAEPPSASPQAPWPKPGCASPHGSHWPSILIC.

This is an uncharacterized protein from Homo sapiens (Human).